Consider the following 1275-residue polypeptide: Surfactin synthase subunit 3 (1275 aa).

The Carrier domain maps to 968 to 1043; that stretch reads GPRNEMEETI…GISAYLKNGG (76 aa). Position 1003 is an O-(pantetheine 4'-phosphoryl)serine (Ser-1003). A thioesterase region spans residues 1059–1271; the sequence is QIIFAFPPVL…ILLEFLNTQT (213 aa). Active-site residues include Ser-1120, Asp-1147, and His-1247.

This sequence belongs to the ATP-dependent AMP-binding enzyme family. The cofactor is pantetheine 4'-phosphate.

The protein operates within antibiotic biosynthesis; surfactin biosynthesis. Functionally, probably activates a leucine. This Bacillus subtilis (strain 168) protein is Surfactin synthase subunit 3 (srfAC).